A 316-amino-acid chain; its full sequence is Uracil-DNA glycosylase (316 aa).

The segment covering 36–79 (AAAAAPAGAGAGASKPARPSAAARPAKGTPAASAATTATGADAS) has biased composition (low complexity). Residues 36 to 91 (AAAAAPAGAGAGASKPARPSAAARPAKGTPAASAATTATGADASAPPPDPGAPTWD) are disordered. Catalysis depends on aspartate 159, which acts as the Proton acceptor.

This sequence belongs to the uracil-DNA glycosylase (UDG) superfamily. UNG family.

It is found in the host nucleus. It carries out the reaction Hydrolyzes single-stranded DNA or mismatched double-stranded DNA and polynucleotides, releasing free uracil.. Its function is as follows. Excises uracil residues from the DNA which can arise as a result of misincorporation of dUMP residues by DNA polymerase or deamination of cytosines. Therefore may reduce deleterious uracil incorporation into the viral genome, particularly in terminally differentiated cells which lack DNA repair enzymes. The chain is Uracil-DNA glycosylase (UL2) from Sus scrofa (Pig).